The sequence spans 508 residues: Histidine ammonia-lyase (508 aa).

A cross-link (5-imidazolinone (Ala-Gly)) is located at residues 143–145 (ASG). S144 carries the 2,3-didehydroalanine (Ser) modification.

This sequence belongs to the PAL/histidase family. Post-translationally, contains an active site 4-methylidene-imidazol-5-one (MIO), which is formed autocatalytically by cyclization and dehydration of residues Ala-Ser-Gly.

The protein resides in the cytoplasm. The enzyme catalyses L-histidine = trans-urocanate + NH4(+). It functions in the pathway amino-acid degradation; L-histidine degradation into L-glutamate; N-formimidoyl-L-glutamate from L-histidine: step 1/3. This Caldanaerobacter subterraneus subsp. tengcongensis (strain DSM 15242 / JCM 11007 / NBRC 100824 / MB4) (Thermoanaerobacter tengcongensis) protein is Histidine ammonia-lyase.